The primary structure comprises 329 residues: UDP-N-acetylenolpyruvoylglucosamine reductase (329 aa).

Residues 28–192 (RVGGPADLLC…ARVEVRLRPG (165 aa)) enclose the FAD-binding PCMH-type domain. The active site involves Arg-172. The tract at residues 204–225 (DRERRRATQPLDRPTFGSTFTN) is disordered. Ser-221 functions as the Proton donor in the catalytic mechanism. Glu-291 is an active-site residue. Residues 303–329 (LAGLDGHAADGGGPGAASGGARPREAT) form a disordered region. The span at 311-320 (ADGGGPGAAS) shows a compositional bias: gly residues.

This sequence belongs to the MurB family. It depends on FAD as a cofactor.

It localises to the cytoplasm. The catalysed reaction is UDP-N-acetyl-alpha-D-muramate + NADP(+) = UDP-N-acetyl-3-O-(1-carboxyvinyl)-alpha-D-glucosamine + NADPH + H(+). It functions in the pathway cell wall biogenesis; peptidoglycan biosynthesis. In terms of biological role, cell wall formation. This is UDP-N-acetylenolpyruvoylglucosamine reductase from Anaeromyxobacter dehalogenans (strain 2CP-C).